The sequence spans 259 residues: tRNA-cytidine(32) 2-sulfurtransferase (259 aa).

The short motif at 37-42 (SGGKDS) is the PP-loop motif element. 3 residues coordinate [4Fe-4S] cluster: C112, C115, and C202.

Belongs to the TtcA family. As to quaternary structure, homodimer. Requires Mg(2+) as cofactor. [4Fe-4S] cluster is required as a cofactor.

The protein localises to the cytoplasm. It catalyses the reaction cytidine(32) in tRNA + S-sulfanyl-L-cysteinyl-[cysteine desulfurase] + AH2 + ATP = 2-thiocytidine(32) in tRNA + L-cysteinyl-[cysteine desulfurase] + A + AMP + diphosphate + H(+). Its pathway is tRNA modification. In terms of biological role, catalyzes the ATP-dependent 2-thiolation of cytidine in position 32 of tRNA, to form 2-thiocytidine (s(2)C32). The sulfur atoms are provided by the cysteine/cysteine desulfurase (IscS) system. The chain is tRNA-cytidine(32) 2-sulfurtransferase from Syntrophotalea carbinolica (strain DSM 2380 / NBRC 103641 / GraBd1) (Pelobacter carbinolicus).